A 383-amino-acid polypeptide reads, in one-letter code: Acetylornithine deacetylase (383 aa).

H80 contacts Zn(2+). Residue D82 is part of the active site. D112 provides a ligand contact to Zn(2+). The active site involves E144. Zn(2+)-binding residues include E145, E169, and H355.

The protein belongs to the peptidase M20A family. ArgE subfamily. Homodimer. Zn(2+) serves as cofactor. Co(2+) is required as a cofactor. It depends on glutathione as a cofactor.

The protein resides in the cytoplasm. The catalysed reaction is N(2)-acetyl-L-ornithine + H2O = L-ornithine + acetate. Its pathway is amino-acid biosynthesis; L-arginine biosynthesis; L-ornithine from N(2)-acetyl-L-ornithine (linear): step 1/1. In terms of biological role, catalyzes the hydrolysis of the amide bond of N(2)-acetylated L-amino acids. Cleaves the acetyl group from N-acetyl-L-ornithine to form L-ornithine, an intermediate in L-arginine biosynthesis pathway, and a branchpoint in the synthesis of polyamines. The chain is Acetylornithine deacetylase from Escherichia coli O8 (strain IAI1).